The following is a 318-amino-acid chain: Nodulation protein D 2 (318 aa).

The HTH lysR-type domain maps to 6–63 (LDLNLLVALDALTTERNLTAAARSINLSQPAMSAAIGRLRDYFRDELFTMNGRELRLT). Positions 23–42 (LTAAARSINLSQPAMSAAIG) form a DNA-binding region, H-T-H motif.

It belongs to the LysR transcriptional regulatory family.

NodD regulates the expression of the nodABCFE genes which encode other nodulation proteins. NodD is also a negative regulator of its own expression. Binds flavonoids as inducers. In Rhizobium leguminosarum bv. phaseoli, this protein is Nodulation protein D 2 (nodD2).